We begin with the raw amino-acid sequence, 351 residues long: MYKLLILIDGISNSGGTDRVASTLSSLLSNHNYDVTLYSLNSGEPYYPVDNKVSIRQPKSSMRLFKLFEFIRYAKNTRPDGVMIISMGKLSVQALLLSKLFRVKSRLICCDHVSIETFSAAVRKLKVFCYGLAEKVVVLTQHDKNYLTSAFSLKNVYVVGNISPFHHENSLNRFDDVFARKQNRVLAVGRLTYQKNFGRLLDIWKNVHKQGWKLLIVGDGEEKAELLEKIKKYHLEESAEIVSPSKKISEYYRSSGVIAMTSRYEGLPMVLIEAKNYALPAIAFDCKTGPAEIIKDDGYVVDYQSNELFTAQLNQLIASEQLRKNFAQAAWQNSADYGPELILKKWNDILN.

The protein belongs to the glycosyltransferase group 1 family. Glycosyltransferase 4 subfamily.

The protein operates within glycan metabolism; exopolysaccharide biosynthesis. In terms of biological role, involved in the biosynthesis of amylovoran which functions as a virulence factor. May be involved in the formation of galactose alpha-1,6 linkages in amylovoran. The chain is Amylovoran biosynthesis glycosyltransferase AmsD (amsD) from Erwinia amylovora (Fire blight bacteria).